A 104-amino-acid chain; its full sequence is L-rhamnose mutarotase (104 aa).

Tyr18 serves as a coordination point for substrate. His22 (proton donor) is an active-site residue. Substrate is bound by residues Tyr41 and 76 to 77 (WW).

The protein belongs to the rhamnose mutarotase family. In terms of assembly, homodimer.

Its subcellular location is the cytoplasm. The enzyme catalyses alpha-L-rhamnose = beta-L-rhamnose. Its pathway is carbohydrate metabolism; L-rhamnose metabolism. L-rhamnose mutarotase involved in ulvan degradation. Ulvan is the main polysaccharide component of the Ulvales (green seaweed) cell wall. It is composed of disaccharide building blocks comprising 3-sulfated rhamnose (Rha3S) linked to D-glucuronic acid (GlcA), L-iduronic acid (IduA), or D-xylose (Xyl). L-rhamnose mutarotase catalyzes the anomeric conversion of alpha- to beta-L-rhamnose. The chain is L-rhamnose mutarotase (rhaM) from Formosa agariphila (strain DSM 15362 / KCTC 12365 / LMG 23005 / KMM 3901 / M-2Alg 35-1).